The following is a 106-amino-acid chain: Iron-sulfur cluster assembly protein CyaY (106 aa).

The protein belongs to the frataxin family.

In terms of biological role, involved in iron-sulfur (Fe-S) cluster assembly. May act as a regulator of Fe-S biogenesis. The sequence is that of Iron-sulfur cluster assembly protein CyaY from Klebsiella pneumoniae subsp. pneumoniae (strain ATCC 700721 / MGH 78578).